Consider the following 178-residue polypeptide: SsrA-binding protein (178 aa).

The interval 1–28 (MAKKSTPVDSGRSKGKKASAPRGGGPAV) is disordered.

Belongs to the SmpB family.

The protein localises to the cytoplasm. Its function is as follows. Required for rescue of stalled ribosomes mediated by trans-translation. Binds to transfer-messenger RNA (tmRNA), required for stable association of tmRNA with ribosomes. tmRNA and SmpB together mimic tRNA shape, replacing the anticodon stem-loop with SmpB. tmRNA is encoded by the ssrA gene; the 2 termini fold to resemble tRNA(Ala) and it encodes a 'tag peptide', a short internal open reading frame. During trans-translation Ala-aminoacylated tmRNA acts like a tRNA, entering the A-site of stalled ribosomes, displacing the stalled mRNA. The ribosome then switches to translate the ORF on the tmRNA; the nascent peptide is terminated with the 'tag peptide' encoded by the tmRNA and targeted for degradation. The ribosome is freed to recommence translation, which seems to be the essential function of trans-translation. In Corynebacterium urealyticum (strain ATCC 43042 / DSM 7109), this protein is SsrA-binding protein.